Consider the following 421-residue polypeptide: Lipid II:glycine glycyltransferase (421 aa).

The protein belongs to the FemABX family. In terms of assembly, monomer.

Its subcellular location is the cytoplasm. The catalysed reaction is beta-D-GlcNAc-(1-&gt;4)-Mur2Ac(oyl-L-Ala-D-isoglutaminyl-L-Lys-D-Ala-D-Ala)-di-trans,octa-cis-undecaprenyl diphosphate + glycyl-tRNA(Gly) = beta-D-GlcNAc-(1-&gt;4)-Mur2Ac(oyl-L-Ala-D-isoglutaminyl-L-Lys-(N(6)-Gly)-D-Ala-D-Ala)-di-trans,octa-cis-undecaprenyl diphosphate + tRNA(Gly) + H(+). Functionally, catalyzes the incorporation of the first glycine of the pentaglycine interpeptide bridge, which is characteristic of the S.aureus peptidoglycan. This glycine is added to the epsilon-amino group of the L-lysine of the membrane-bound lipid II intermediate (GlcNAc-(beta-1,4)-N-acetylmuramic acid(-L-Ala-D-iGln-L-Lys-D-Ala-D-Ala)-pyrophosphoryl-undecaprenol), using glycyl-tRNA(Gly) as donor, in a ribosome-independent mechanism. Involved in methicillin resistance. The chain is Lipid II:glycine glycyltransferase (femX) from Staphylococcus aureus (strain Mu50 / ATCC 700699).